The primary structure comprises 330 residues: Malate dehydrogenase (330 aa).

An NAD(+)-binding site is contributed by 15-21 (GAGGQIG). The substrate site is built by R95 and R101. NAD(+)-binding positions include N108, Q115, and 132–134 (VGN). Substrate is bound by residues N134 and R165. Residue H190 is the Proton acceptor of the active site.

Belongs to the LDH/MDH superfamily. MDH type 2 family.

It carries out the reaction (S)-malate + NAD(+) = oxaloacetate + NADH + H(+). In terms of biological role, catalyzes the reversible oxidation of malate to oxaloacetate. The sequence is that of Malate dehydrogenase from Corynebacterium jeikeium (strain K411).